A 382-amino-acid chain; its full sequence is Succinate--CoA ligase [ADP-forming] subunit beta (382 aa).

One can recognise an ATP-grasp domain in the interval 9–237 (RDLLARYGIP…PSAEPEAERR (229 aa)). Residues K45, 52–54 (GRG), I94, and E99 each bind ATP. Mg(2+) contacts are provided by N192 and D206. Residues N257 and 314-316 (GIT) each bind substrate.

The protein belongs to the succinate/malate CoA ligase beta subunit family. Heterotetramer of two alpha and two beta subunits. It depends on Mg(2+) as a cofactor.

The enzyme catalyses succinate + ATP + CoA = succinyl-CoA + ADP + phosphate. It carries out the reaction GTP + succinate + CoA = succinyl-CoA + GDP + phosphate. It participates in carbohydrate metabolism; tricarboxylic acid cycle; succinate from succinyl-CoA (ligase route): step 1/1. In terms of biological role, succinyl-CoA synthetase functions in the citric acid cycle (TCA), coupling the hydrolysis of succinyl-CoA to the synthesis of either ATP or GTP and thus represents the only step of substrate-level phosphorylation in the TCA. The beta subunit provides nucleotide specificity of the enzyme and binds the substrate succinate, while the binding sites for coenzyme A and phosphate are found in the alpha subunit. This chain is Succinate--CoA ligase [ADP-forming] subunit beta, found in Chloroflexus aggregans (strain MD-66 / DSM 9485).